A 977-amino-acid chain; its full sequence is Kinesin-like protein KIN-7L, chloroplastic (977 aa).

Residues 1-12 (MGSKQVSKTRNG) are compositionally biased toward polar residues. The tract at residues 1 to 66 (MGSKQVSKTR…PPKPLQSKEN (66 aa)) is disordered. Composition is skewed to low complexity over residues 22-31 (SSASSTTSSS) and 38-54 (SVDSHSSPTSSSVRSKP). Residues 66-385 (NVTVTVRFRP…LKFAHRAKHI (320 aa)) form the Kinesin motor domain. 146 to 153 (GVTSSGKT) serves as a coordination point for ATP. The stretch at 386–471 (EIQAAQNKII…LTKLILVSNK (86 aa)) forms a coiled coil. Residues 549-589 (DSSLGGSSLSDKSSAVKSNSTPSTPQGEGSDFHTESRLSEG) form a disordered region. Positions 551-561 (SLGGSSLSDKS) are enriched in low complexity. The span at 563–575 (AVKSNSTPSTPQG) shows a compositional bias: polar residues. Coiled coils occupy residues 626-688 (MEIL…GKQI) and 732-942 (IQEQ…LENE). A compositionally biased stretch (polar residues) spans 864–876 (SSVTTPQGKTGNL). Disordered regions lie at residues 864-891 (SSVTTPQGKTGNLRNGRRESVSKRKEQE) and 958-977 (AANSGLSDSVSETRIEHFGT). The span at 879–891 (GRRESVSKRKEQE) shows a compositional bias: basic and acidic residues. Residues 958-967 (AANSGLSDSV) show a composition bias toward polar residues. Over residues 968–977 (SETRIEHFGT) the composition is skewed to basic and acidic residues.

The protein belongs to the TRAFAC class myosin-kinesin ATPase superfamily. Kinesin family. KIN-7 subfamily.

Its subcellular location is the plastid. The protein resides in the chloroplast. The chain is Kinesin-like protein KIN-7L, chloroplastic from Arabidopsis thaliana (Mouse-ear cress).